The following is a 692-amino-acid chain: Elongation factor G 2 (692 aa).

The tr-type G domain occupies 8 to 283 (EKTRNIGIMA…SVVAYLPSPL (276 aa)). GTP-binding positions include 17 to 24 (AHIDAGKT), 81 to 85 (DTPGH), and 135 to 138 (NKMD).

This sequence belongs to the TRAFAC class translation factor GTPase superfamily. Classic translation factor GTPase family. EF-G/EF-2 subfamily.

It is found in the cytoplasm. In terms of biological role, catalyzes the GTP-dependent ribosomal translocation step during translation elongation. During this step, the ribosome changes from the pre-translocational (PRE) to the post-translocational (POST) state as the newly formed A-site-bound peptidyl-tRNA and P-site-bound deacylated tRNA move to the P and E sites, respectively. Catalyzes the coordinated movement of the two tRNA molecules, the mRNA and conformational changes in the ribosome. The chain is Elongation factor G 2 from Geobacter sulfurreducens (strain ATCC 51573 / DSM 12127 / PCA).